The primary structure comprises 176 residues: MKHPIVKHFLSNPQHYRLFKNVMESPNEKDARSLDELFKQFYKEIRIVKYMNSMIRIFSIDFDKRVRKNQKRYPLTVDHPEAGDRLSSETGSDAFEEFLDRQDDLSQHVQDYQLYQAIQKLTDKQKSVLTKVYLHGATMQEIADSLGESRQNISNIHKKGLENIRKQLAAQKKGEK.

The Polymerase core binding signature appears at 30–43 (DARSLDELFKQFYK). Positions 139–158 (MQEIADSLGESRQNISNIHK) form a DNA-binding region, H-T-H motif.

The protein belongs to the sigma-70 factor family. Interacts with RNA polymerase.

Functionally, sigma factors are initiation factors that promote the attachment of RNA polymerase to specific initiation sites and are then released. Together with its coactivator RsoA, positively regulates the expression of at least three operons, including oxdC-yvrL, sigO-rsoA and yvrJ. Required for the acid stress-dependent induction of the oxalate decarboxylase oxdC. This Bacillus subtilis (strain 168) protein is RNA polymerase sigma factor SigO (sigO).